Here is a 340-residue protein sequence, read N- to C-terminus: tRNA N6-adenosine threonylcarbamoyltransferase (340 aa).

Residues histidine 111 and histidine 115 each contribute to the Fe cation site. Residues valine 133–glycine 137, aspartate 166, glycine 179, aspartate 183, and asparagine 272 each bind substrate. Aspartate 300 provides a ligand contact to Fe cation.

This sequence belongs to the KAE1 / TsaD family. The cofactor is Fe(2+).

It is found in the cytoplasm. It carries out the reaction L-threonylcarbamoyladenylate + adenosine(37) in tRNA = N(6)-L-threonylcarbamoyladenosine(37) in tRNA + AMP + H(+). Its function is as follows. Required for the formation of a threonylcarbamoyl group on adenosine at position 37 (t(6)A37) in tRNAs that read codons beginning with adenine. Is involved in the transfer of the threonylcarbamoyl moiety of threonylcarbamoyl-AMP (TC-AMP) to the N6 group of A37, together with TsaE and TsaB. TsaD likely plays a direct catalytic role in this reaction. The chain is tRNA N6-adenosine threonylcarbamoyltransferase from Geobacter sulfurreducens (strain ATCC 51573 / DSM 12127 / PCA).